The chain runs to 609 residues: Glutamine--fructose-6-phosphate aminotransferase [isomerizing] (609 aa).

The active-site Nucleophile; for GATase activity is the Cys2. The Glutamine amidotransferase type-2 domain occupies 2 to 217; it reads CGIVGYIGRR…EGWLAELTPE (216 aa). SIS domains lie at 286 to 425 and 458 to 599; these read SAAE…QNGR and AAEA…VDKP. The For Fru-6P isomerization activity role is filled by Lys604.

Homodimer.

The protein localises to the cytoplasm. It carries out the reaction D-fructose 6-phosphate + L-glutamine = D-glucosamine 6-phosphate + L-glutamate. Functionally, catalyzes the first step in hexosamine metabolism, converting fructose-6P into glucosamine-6P using glutamine as a nitrogen source. The sequence is that of Glutamine--fructose-6-phosphate aminotransferase [isomerizing] from Symbiobacterium thermophilum (strain DSM 24528 / JCM 14929 / IAM 14863 / T).